Consider the following 342-residue polypeptide: Immune-associated nucleotide-binding protein 9 (342 aa).

An AIG1-type G domain is found at 22–229; it reads NPKRTLVLVG…YSDELFHELQ (208 aa). A G1 region spans residues 31 to 38; the sequence is GRTGNGKS. GTP contacts are provided by residues 31–39 and serine 52; that span reads GRTGNGKSA. Residues 58 to 62 are G2; it reads GVTST. A G3 region spans residues 80-83; the sequence is DTPG. The G4 stretch occupies residues 149-152; it reads TGGD. Positions 188–190 are G5; sequence NNK. Asparagine 189 is a binding site for GTP. Residues 276-342 adopt a coiled-coil conformation; that stretch reads ETKLRDTAKR…QKKLGKCINL (67 aa).

Belongs to the TRAFAC class TrmE-Era-EngA-EngB-Septin-like GTPase superfamily. AIG1/Toc34/Toc159-like paraseptin GTPase family. IAN subfamily. In terms of tissue distribution, mainly expressed in leaves.

In Arabidopsis thaliana (Mouse-ear cress), this protein is Immune-associated nucleotide-binding protein 9.